Here is a 496-residue protein sequence, read N- to C-terminus: T-cell activation inhibitor, mitochondrial (496 aa).

A coiled-coil region spans residues 404–437; the sequence is KAQQARENMKRKEELKVIENELIQASTKKFSLEK.

Its subcellular location is the mitochondrion. Functionally, may regulate T-cell apoptosis. This Homo sapiens (Human) protein is T-cell activation inhibitor, mitochondrial (TCAIM).